A 477-amino-acid chain; its full sequence is UDP-N-acetylmuramate--L-alanine ligase (477 aa).

112–118 (GAHGKTT) contributes to the ATP binding site.

This sequence belongs to the MurCDEF family.

The protein resides in the cytoplasm. The catalysed reaction is UDP-N-acetyl-alpha-D-muramate + L-alanine + ATP = UDP-N-acetyl-alpha-D-muramoyl-L-alanine + ADP + phosphate + H(+). It functions in the pathway cell wall biogenesis; peptidoglycan biosynthesis. In terms of biological role, cell wall formation. The polypeptide is UDP-N-acetylmuramate--L-alanine ligase (Acidovorax ebreus (strain TPSY) (Diaphorobacter sp. (strain TPSY))).